Consider the following 566-residue polypeptide: Glucose starvation modulator protein 1 (566 aa).

Positions 20–48 form a DNA-binding region, zn(2)-C6 fungal-type; that stretch reads CVFCHQKHLQCSNERPCKNCVKRNIAHGC. 2 disordered regions span residues 63–92 and 250–270; these read GVPG…SPMD and KQAS…NTLS. Low complexity predominate over residues 253–270; it reads SPSPSNTSTSENNTNTLS.

The protein belongs to the ERT1/acuK family.

The protein localises to the nucleus. Transcription factor which regulates nonfermentable carbon utilization. The polypeptide is Glucose starvation modulator protein 1 (GSM1) (Candida albicans (strain WO-1) (Yeast)).